We begin with the raw amino-acid sequence, 816 residues long: Phosphatidylinositol 4-kinase beta (816 aa).

Disordered regions lie at residues 1–29 (MGDMVVEPATLKPTSEPTPSPSGNNGGSL), 99–121 (EEEDEMEPGVVSGTAKGTRRRRQ), and 250–318 (RKRE…SFSS). Gly2 is subject to N-acetylglycine. The tract at residues 2–68 (GDMVVEPATL…VKLLHGGVAI (67 aa)) is interaction with ACBD3. Residues 10–29 (TLKPTSEPTPSPSGNNGGSL) show a composition bias toward low complexity. Residues 61–242 (LLHGGVAISS…GTKLRKLILS (182 aa)) enclose the PIK helical domain. At Ser258 the chain carries Phosphoserine. Thr263 is modified (phosphothreonine). 5 positions are modified to phosphoserine: Ser266, Ser275, Ser277, Ser284, and Ser294. Polar residues-rich tracts occupy residues 278 to 297 (DATASISLSSNLKRTASNPK) and 306 to 318 (SSSTESIDNSFSS). At Ser428 the chain carries Phosphoserine. Thr438 is subject to Phosphothreonine. The residue at position 511 (Ser511) is a Phosphoserine. Thr517 and Thr519 each carry phosphothreonine. The region spanning 535 to 801 (EPWQEKVRRI…MVDGSMRSIT (267 aa)) is the PI3K/PI4K catalytic domain. Positions 541 to 547 (VRRIREG) are G-loop. A catalytic loop region spans residues 668–676 (QVKDRHNGN). The segment at 687–711 (HIDFGFILSSSPRNLGFETSAFKLT) is activation loop.

It belongs to the PI3/PI4-kinase family. Type III PI4K subfamily. Interacts with ARF1 and ARF3 in the Golgi complex, but not with ARF4, ARF5 or ARF6. Interacts with NCS1/FREQ in a calcium-independent manner. Interacts with CALN1/CABP8 and CALN2/CABP7; in a calcium-dependent manner; this interaction competes with NCS1/FREQ binding. Interacts with ACBD3. Interacts with ARMH3, YWHAB, YWHAE, YWHAG, YWHAH, YWHAQ, YWHAZ and SFN. Interacts with GGA2 (via VHS domain); the interaction is important for PI4KB location at the Golgi apparatus membrane. Interacts with ATG9A. Requires Mg(2+) as cofactor. It depends on Mn(2+) as a cofactor. In terms of tissue distribution, strongly expressed in brain, kidney, lung, small intestine, uterus and adrenal gland. Weaker expression in liver, heart, skeletal muscle, thymus and testis. Not detected in spleen.

It is found in the golgi apparatus. The protein resides in the endomembrane system. Its subcellular location is the mitochondrion outer membrane. The protein localises to the rough endoplasmic reticulum membrane. It localises to the golgi apparatus membrane. It catalyses the reaction a 1,2-diacyl-sn-glycero-3-phospho-(1D-myo-inositol) + ATP = a 1,2-diacyl-sn-glycero-3-phospho-(1D-myo-inositol 4-phosphate) + ADP + H(+). Inhibited by wortmannin. Increased kinase activity upon interaction with NCS1/FREQ. Its function is as follows. Phosphorylates phosphatidylinositol (PI) in the first committed step in the production of the second messenger inositol-1,4,5,-trisphosphate (PIP). May regulate Golgi disintegration/reorganization during mitosis, possibly via its phosphorylation. Involved in Golgi-to-plasma membrane trafficking. May play an important role in the inner ear development. This chain is Phosphatidylinositol 4-kinase beta (Pi4kb), found in Rattus norvegicus (Rat).